A 572-amino-acid chain; its full sequence is Arginine--tRNA ligase (572 aa).

A 'HIGH' region motif is present at residues 127 to 137 (ANPTGPLHVGH).

It belongs to the class-I aminoacyl-tRNA synthetase family. In terms of assembly, monomer.

It is found in the cytoplasm. It carries out the reaction tRNA(Arg) + L-arginine + ATP = L-arginyl-tRNA(Arg) + AMP + diphosphate. This is Arginine--tRNA ligase from Vesicomyosocius okutanii subsp. Calyptogena okutanii (strain HA).